The primary structure comprises 225 residues: Ribonuclease HII (225 aa).

The RNase H type-2 domain maps to 28-220 (DIIAGTDEVG…VKEYVDISQE (193 aa)). Asp-34, Glu-35, and Asp-129 together coordinate a divalent metal cation.

It belongs to the RNase HII family. The cofactor is Mn(2+). It depends on Mg(2+) as a cofactor.

It localises to the cytoplasm. The enzyme catalyses Endonucleolytic cleavage to 5'-phosphomonoester.. Its function is as follows. Endonuclease that specifically degrades the RNA of RNA-DNA hybrids. The sequence is that of Ribonuclease HII from Desulfotalea psychrophila (strain LSv54 / DSM 12343).